The sequence spans 176 residues: Glyoxalase domain-containing protein RDO1 (176 aa).

Residues 53 to 172 (SLDHLVITCH…DNNLIELSSY (120 aa)) enclose the VOC domain. The Proton donor/acceptor role is filled by Glu168.

The protein belongs to the glyoxalase I family.

Its pathway is secondary metabolite biosynthesis. In terms of biological role, glyoxalase domain-containing protein; part of the gene cluster that mediates the biosynthesis of itaconic acid and 2-hydroxyparaconate. Cis-aconitate is secreted by the mitochondrial tricarboxylate transporter MTT1. In the cytosol cis-aconitate is converted into trans-aconitate via isomerization by the aconitate-delta-isomerase ADI1. Decarboxylation of trans-aconitate by the trans-aconitate decarboxylase TAD1 then leads then to the production of itaconic acid. The cytochrome P450 monooxygenase CYP3 further converts itaconate to 2-hydroxyparaconate via oxidation of the double bond, leading to a transient epoxide, which can subsequently be lactonized to produce 2-hydroxyparaconate. Secretion of itaconate and possibly 2-hydroxyparaconate into the medium is mediated by the major facilitator ITP1. The glyoxalase domain-containing protein RDO1 is not involved in the biosynthesis of itaconate and 2-hydroxyparaconate, however, it might play a role in the further conversion of 2-hydroxyparaconate to itatartarate. This chain is Glyoxalase domain-containing protein RDO1, found in Mycosarcoma maydis (Corn smut fungus).